The sequence spans 129 residues: Large ribosomal subunit protein bL17 (129 aa).

It belongs to the bacterial ribosomal protein bL17 family. As to quaternary structure, part of the 50S ribosomal subunit. Contacts protein L32.

The sequence is that of Large ribosomal subunit protein bL17 from Hahella chejuensis (strain KCTC 2396).